Here is an 843-residue protein sequence, read N- to C-terminus: Taste receptor type 1 member 2 (843 aa).

Residues 1–19 (MGPQARTLCLLSLLLHVLP) form the signal peptide. The Extracellular portion of the chain corresponds to 20–570 (KPGKLVENSD…TFLEWHEVPT (551 aa)). N-linked (GlcNAc...) asparagine glycans are attached at residues N87, N296, N316, N355, N372, N432, N484, N491, and N531. The chain crosses the membrane as a helical span at residues 571 to 591 (IVVAILAALGFFSTLAILFIF). Topologically, residues 592–606 (WRHFQTPMVRSAGGP) are cytoplasmic. Residues 607-627 (MCFLMLVPLLLAFGMVPVYVG) traverse the membrane as a helical segment. At 628 to 642 (PPTVFSCFCRQAFFT) the chain is on the extracellular side. Residues 643–663 (VCFSICLSCITVRSFQIVCVF) traverse the membrane as a helical segment. Residues 664–682 (KMARRLPSAYSFWMRYHGP) are Cytoplasmic-facing. Residues 683–703 (YVFVAFITAIKVALVVGNMLA) form a helical membrane-spanning segment. The Extracellular segment spans residues 704 to 731 (TTINPIGRTDPDDPNIMILSCHPNYRNG). The helical transmembrane segment at 732-752 (LLFNTSMDLLLSVLGFSFAYM) threads the bilayer. Residues 753-764 (GKELPTNYNEAK) lie on the Cytoplasmic side of the membrane. A helical transmembrane segment spans residues 765–785 (FITLSMTFSFTSSISLCTFMS). Residues 786–789 (VHDG) are Extracellular-facing. The chain crosses the membrane as a helical span at residues 790 to 810 (VLVTIMDLLVTVLNFLAIGLG). Residues 811-843 (YFGPKCYMILFYPERNTSAYFNSMIQGYTMRKS) lie on the Cytoplasmic side of the membrane.

This sequence belongs to the G-protein coupled receptor 3 family. TAS1R subfamily. Forms heterodimers with TAS1R3. As to expression, abundantly expressed in circumvallate and foliate papillae.

It localises to the cell membrane. In terms of biological role, putative taste receptor. TAS1R2/TAS1R3 recognizes diverse natural and synthetic sweeteners. The polypeptide is Taste receptor type 1 member 2 (Tas1r2) (Rattus norvegicus (Rat)).